Reading from the N-terminus, the 269-residue chain is Proline-rich protein 7 (269 aa).

At 1 to 9 (MVMSQGTYT) the chain is on the extracellular side. Positions 1-44 (MVMSQGTYTFLTCFAGFWLIWGLIVLLCCFCSFLRRRLKRRQEE) are required for interaction with NMDA receptors. The segment at 2–39 (VMSQGTYTFLTCFAGFWLIWGLIVLLCCFCSFLRRRLK) is required for membrane localization. The chain crosses the membrane as a helical; Signal-anchor for type III membrane protein span at residues 10–30 (FLTCFAGFWLIWGLIVLLCCF). Topologically, residues 31–269 (CSFLRRRLKR…IPLFGRTTAV (239 aa)) are cytoplasmic. Serine 64 is subject to Phosphoserine. Disordered stretches follow at residues 64–83 (SLAG…RSRL) and 98–128 (LLHH…LSVP). Residues 108–117 (AHPHPHHHAL) are compositionally biased toward basic residues. Residues 118 to 128 (PHPPPSHLSVP) show a composition bias toward pro residues. Residues 146–166 (PCYEEAVLMAEPPPPYSEVLT) are required for internalization. A required for apoptosis induction region spans residues 146–269 (PCYEEAVLMA…IPLFGRTTAV (124 aa)). Residues 267-269 (TAV) carry the PDZ-binding motif.

As to quaternary structure, forms a complex with NMDA receptor zeta subunit GRIN1 and epsilon subunit GRIN2B. Interacts with GRIN2B. Interacts with GRIN1; the interaction is reduced upon NMDA receptor activity. Found in a postsynaptic membrane complex with DLG4 and GRIN1. Interacts with DLG4 (via PDZ3 domain and to lesser degree via PDZ2 domain). Interacts with FBXW7. Found in a complex with JUN and FBXW7. Interacts with JUN and FBXW7; the interaction inhibits ubiquitination-mediated JUN degradation promoting its phosphorylation and transcriptional activity. Interacts with SRC. In terms of processing, palmitoylated. Tyrosine phosphorylated, possibly by SRC. In terms of tissue distribution, expressed in brain. Expressed in the cerebral cortex and especially in hippocampal neural cells (at protein level).

It is found in the cell membrane. Its subcellular location is the postsynaptic cell membrane. It localises to the postsynaptic density membrane. The protein resides in the cytoplasm. The protein localises to the perinuclear region. It is found in the synapse. Its subcellular location is the cell projection. It localises to the dendrite. The protein resides in the nucleus. Functionally, acts as a synapse-to-nucleus messenger to promote NMDA receptor-mediated excitotoxicity in neurons in a JUN-dependent manner. Inhibits ubiquitination-mediated degradation and promotes phosphorylation and transcriptional activity of transcription factor JUN. Might play a redundant role in the regulation of T cell receptor signaling. Might promote apoptosis in T cells. This chain is Proline-rich protein 7 (Prr7), found in Rattus norvegicus (Rat).